We begin with the raw amino-acid sequence, 110 residues long: Large ribosomal subunit protein uL22 (110 aa).

This sequence belongs to the universal ribosomal protein uL22 family. Part of the 50S ribosomal subunit.

This protein binds specifically to 23S rRNA; its binding is stimulated by other ribosomal proteins, e.g. L4, L17, and L20. It is important during the early stages of 50S assembly. It makes multiple contacts with different domains of the 23S rRNA in the assembled 50S subunit and ribosome. Functionally, the globular domain of the protein is located near the polypeptide exit tunnel on the outside of the subunit, while an extended beta-hairpin is found that lines the wall of the exit tunnel in the center of the 70S ribosome. The sequence is that of Large ribosomal subunit protein uL22 from Citrobacter koseri (strain ATCC BAA-895 / CDC 4225-83 / SGSC4696).